An 873-amino-acid polypeptide reads, in one-letter code: Potassium voltage-gated channel subfamily KQT member 3 (873 aa).

The disordered stretch occupies residues 1-41; that stretch reads MGLKARRAAGAAGGGGGEGGGGGGGAANPAGGDSAVAGDEE. At 1–121 the chain is on the cytoplasmic side; the sequence is MGLKARRAAG…IYDALERPRG (121 aa). The segment covering 11 to 26 has biased composition (gly residues); sequence AAGGGGGEGGGGGGGA. Position 82 is a phosphothreonine (Thr-82). The chain crosses the membrane as a helical span at residues 122–144; the sequence is WALLYHALVFLIVLGCLILAVLT. Over 145–154 the chain is Extracellular; sequence TFKEYETVSG. A helical membrane pass occupies residues 155-176; sequence DWLLLLETFAIFIFGAEFALRI. Residues 177–194 are Cytoplasmic-facing; the sequence is WAAGCCCRYKGWRGRLKF. Residues 195-214 form a helical membrane-spanning segment; sequence ARKPLCMLDIFVLIASVPVV. The Extracellular segment spans residues 215 to 226; the sequence is AVGNQGNVLATS. The helical; Voltage-sensor transmembrane segment at 227–245 threads the bilayer; it reads LRSLRFLQILRMLRMDRRG. Arg-244 provides a ligand contact to a 1,2-diacyl-sn-glycero-3-phospho-(1D-myo-inositol-4,5-bisphosphate). At 246–257 the chain is on the cytoplasmic side; that stretch reads GTWKLLGSAICA. A helical membrane pass occupies residues 258–283; the sequence is HSKELITAWYIGFLTLILSSFLVYLV. A 1,2-diacyl-sn-glycero-3-phospho-(1D-myo-inositol-4,5-bisphosphate) is bound at residue Lys-260. Over 284–303 the chain is Extracellular; it reads EKDVPEMDAQGEEMKEEFET. The pore-forming intramembrane region spans 304–316; sequence YADALWWGLITLA. The Selectivity filter signature appears at 317–322; the sequence is TIGYGD. Residues 317 to 327 are Extracellular-facing; the sequence is TIGYGDKTPKT. Residues 328-354 form a helical membrane-spanning segment; the sequence is WEGRLIAATFSLIGVSFFALPAGILGS. The Cytoplasmic portion of the chain corresponds to 355–873; sequence GLALKVQEQH…SIWTPSNKPT (519 aa). The interval 357 to 538 is mediates interaction with calmodulin; sequence ALKVQEQHRQ…RLYKKKFKET (182 aa). Lys-367 serves as a coordination point for a 1,2-diacyl-sn-glycero-3-phospho-(1D-myo-inositol-4,5-bisphosphate). 3 disordered regions span residues 575-603, 723-742, and 766-873; these read PGPP…PRNE, RGGP…GSTY, and ELQG…NKPT. Composition is skewed to polar residues over residues 588–601, 725–741, and 844–873; these read KGSA…QSPR, GPSS…SGST, and DPFT…NKPT.

The protein belongs to the potassium channel family. KQT (TC 1.A.1.15) subfamily. Kv7.3/KCNQ3 sub-subfamily. As to quaternary structure, heterotetramer with KCNQ2; forms heterotetrameric native M-channel responsible for the M-current. Interacts with calmodulin; the interaction is calcium-independent, constitutive and participates in the proper assembly of a functional M-channel. Heteromultimer with KCNQ5. May associate with KCNE2. Interacts with IQCJ-SCHIP1. Interacts (via the pore module) with SLC5A3/SMIT1; forms a coregulatory complex that alters ion selectivity, voltage dependence and gating kinetics of the channel. In terms of processing, KCNQ2/KCNQ3 are ubiquitinated by NEDD4L. Ubiquitination leads to protein degradation. Degradation induced by NEDD4L is inhibited by USP36. As to expression, expressed in dorsal root ganglion (DRG) neurons.

The protein localises to the cell membrane. The catalysed reaction is K(+)(in) = K(+)(out). The enzyme catalyses Rb(+)(in) = Rb(+)(out). It catalyses the reaction Cs(+)(in) = Cs(+)(out). It carries out the reaction Na(+)(in) = Na(+)(out). With respect to regulation, phosphatidylinositol-4,5-bisphosphate (PIP2) potentiates the activation of KCNQ channels by enhancing the electro-mechanical coupling of the voltage-sensing domain (VSD) and the pore-forming domain (PD). In the closed state of the channel, PIP2 is anchored at the S2-S3 loop; upon channel activation, PIP2 interacts with the S4-S5 linker and is involved in channel gating. Calcium suppresses KCNQ2-KCNQ3 channel currents, with calcium-bound calmodulin inducing a change in channel configuration which leads to the reduction of channel affinity for PIP2 and subsequent current suppression. Functionally, pore-forming subunit of the voltage-gated potassium (Kv) M-channel which is responsible for the M-current, a key controller of neuronal excitability. M-channel is composed of pore-forming subunits KCNQ2 and KCNQ3 assembled as heterotetramers. The native M-current has a slowly activating and deactivating potassium conductance which plays a critical role in determining the subthreshold electrical excitability of neurons as well as the responsiveness to synaptic inputs. M-channel is selectively permeable in vitro to other cations besides potassium, in decreasing order of affinity K(+) &gt; Rb(+) &gt; Cs(+) &gt; Na(+). M-channel association with SLC5A3/SMIT1 alters channel ion selectivity, increasing Na(+) and Cs(+) permeation relative to K(+). Suppressed by activation of M1 muscarinic acetylcholine receptors. KCNQ3 also associates with KCNQ5 to form a functional channel in vitro and may also contribute to the M-current in brain. The sequence is that of Potassium voltage-gated channel subfamily KQT member 3 from Mus musculus (Mouse).